The chain runs to 72 residues: NAD(P)H-quinone oxidoreductase subunit O (72 aa).

This sequence belongs to the complex I NdhO subunit family. NDH-1 can be composed of about 15 different subunits; different subcomplexes with different compositions have been identified which probably have different functions.

Its subcellular location is the cellular thylakoid membrane. It catalyses the reaction a plastoquinone + NADH + (n+1) H(+)(in) = a plastoquinol + NAD(+) + n H(+)(out). The enzyme catalyses a plastoquinone + NADPH + (n+1) H(+)(in) = a plastoquinol + NADP(+) + n H(+)(out). Functionally, NDH-1 shuttles electrons from an unknown electron donor, via FMN and iron-sulfur (Fe-S) centers, to quinones in the respiratory and/or the photosynthetic chain. The immediate electron acceptor for the enzyme in this species is believed to be plastoquinone. Couples the redox reaction to proton translocation, and thus conserves the redox energy in a proton gradient. Cyanobacterial NDH-1 also plays a role in inorganic carbon-concentration. This is NAD(P)H-quinone oxidoreductase subunit O from Trichodesmium erythraeum (strain IMS101).